Consider the following 425-residue polypeptide: Histidine--tRNA ligase (425 aa).

Belongs to the class-II aminoacyl-tRNA synthetase family. In terms of assembly, homodimer.

The protein resides in the cytoplasm. The catalysed reaction is tRNA(His) + L-histidine + ATP = L-histidyl-tRNA(His) + AMP + diphosphate + H(+). The chain is Histidine--tRNA ligase from Aeromonas salmonicida (strain A449).